The chain runs to 89 residues: Small ribosomal subunit protein bS20 (89 aa).

A compositionally biased stretch (basic residues) spans methionine 1–lysine 12. The disordered stretch occupies residues methionine 1–glutamine 24.

Belongs to the bacterial ribosomal protein bS20 family.

Its function is as follows. Binds directly to 16S ribosomal RNA. The protein is Small ribosomal subunit protein bS20 of Xanthomonas campestris pv. campestris (strain 8004).